Consider the following 92-residue polypeptide: DNA-directed RNA polymerase subunit omega (92 aa).

It belongs to the RNA polymerase subunit omega family. As to quaternary structure, the RNAP catalytic core consists of 2 alpha, 1 beta, 1 beta' and 1 omega subunit. When a sigma factor is associated with the core the holoenzyme is formed, which can initiate transcription.

The catalysed reaction is RNA(n) + a ribonucleoside 5'-triphosphate = RNA(n+1) + diphosphate. Promotes RNA polymerase assembly. Latches the N- and C-terminal regions of the beta' subunit thereby facilitating its interaction with the beta and alpha subunits. This Shewanella baltica (strain OS223) protein is DNA-directed RNA polymerase subunit omega.